Consider the following 171-residue polypeptide: Putative ankyrin repeat protein PA3287 (171 aa).

3 ANK repeats span residues Lys-48–Leu-77, Ala-81–Gly-110, and Asp-114–Ala-143.

This is Putative ankyrin repeat protein PA3287 from Pseudomonas aeruginosa (strain ATCC 15692 / DSM 22644 / CIP 104116 / JCM 14847 / LMG 12228 / 1C / PRS 101 / PAO1).